Here is a 390-residue protein sequence, read N- to C-terminus: Tumor susceptibility gene 101 protein (390 aa).

Alanine 2 is modified (N-acetylalanine). The UEV domain occupies 2–145 (AVSESQLKKM…GDEPPVFSRP (144 aa)). Positions 158–162 (PPNTS) are interaction with CEP55. Residues 198-214 (ATTSSQYPSQPPVTTVG) show a composition bias toward polar residues. The interval 198-220 (ATTSSQYPSQPPVTTVGPSRDGT) is disordered. Residue threonine 220 is modified to Phosphothreonine. Residues 235–316 (SDKLRWRMKE…NQSENNDIDE (82 aa)) are a coiled coil. Positions 320–323 (PTAP) match the PTAP motif motif. The SB domain maps to 322-390 (APLYKQILNL…RKTAGLSDLY (69 aa)).

This sequence belongs to the ubiquitin-conjugating enzyme family. UEV subfamily. As to quaternary structure, component of the ESCRT-I complex (endosomal sorting complex required for transport I) which consists of TSG101, VPS28, a VPS37 protein (VPS37A to -D) and MVB12A or MVB12B in a 1:1:1:1 stoichiometry. Interacts with VPS37A, VPS37B and VPS37C. Interacts with DMAP1. Interacts with ubiquitin. Interacts with stathmin, GMCL and AATF. Component of an ESCRT-I complex (endosomal sorting complex required for transport I) which consists of TSG101, VPS28, VPS37A and UBAP1 in a 1:1:1:1 stoichiometry. Interacts with HGS; the interaction mediates the association with the ESCRT-0 complex. Interacts with GGA1 and GGA3. Interacts (via UEV domain) with PDCD6IP/AIP1. Interacts with VPS28, SNF8 and VPS36. Self-associates. Interacts with MVB12A; the association appears to be mediated by the TSG101-VPS37 binary subcomplex. Interacts with VPS37D. Interacts with LRSAM1. Interacts with CEP55; the interaction is required for cytokinesis but not for viral budding. Interacts with PDCD6. Interacts with LITAF. Interacts with MGRN1. Interacts with ARRDC1; recruits TSG101 to the plasma membrane. In terms of assembly, (Microbial infection) Interacts with HIV-1 p6. (Microbial infection) Interacts with human spumavirus Gag. As to quaternary structure, (Microbial infection) Interacts with HTLV-1 Gag. In terms of assembly, (Microbial infection) Interacts with Ebola virus VP40. (Microbial infection) Interacts with EIAV p9; the interaction has been shown in vitro. As to quaternary structure, (Microbial infection) Interacts with Lassa virus protein Z. In terms of assembly, (Microbial infection) Interacts with hepatitis E virus protein ORF3. Monoubiquitinated at multiple sites by LRSAM1 and by MGRN1. Ubiquitination inactivates it, possibly by regulating its shuttling between an active membrane-bound protein and an inactive soluble form. Ubiquitination by MGRN1 requires the presence of UBE2D1. As to expression, heart, brain, placenta, lung, liver, skeletal, kidney and pancreas.

It is found in the cytoplasm. It localises to the early endosome membrane. The protein localises to the late endosome membrane. The protein resides in the cytoskeleton. Its subcellular location is the microtubule organizing center. It is found in the centrosome. It localises to the midbody. The protein localises to the midbody ring. The protein resides in the nucleus. Its function is as follows. Component of the ESCRT-I complex, a regulator of vesicular trafficking process. Binds to ubiquitinated cargo proteins and is required for the sorting of endocytic ubiquitinated cargos into multivesicular bodies (MVBs). Mediates the association between the ESCRT-0 and ESCRT-I complex. Required for completion of cytokinesis; the function requires CEP55. May be involved in cell growth and differentiation. Acts as a negative growth regulator. Involved in the budding of many viruses through an interaction with viral proteins that contain a late-budding motif P-[ST]-A-P. This interaction is essential for viral particle budding of numerous retroviruses. Required for the exosomal release of SDCBP, CD63 and syndecan. It may also play a role in the extracellular release of microvesicles that differ from the exosomes. This chain is Tumor susceptibility gene 101 protein (TSG101), found in Homo sapiens (Human).